A 144-amino-acid polypeptide reads, in one-letter code: L-fucose mutarotase (144 aa).

The active-site Proton donor is His22. Residues Asp30, Arg109, and 131–133 (YGN) each bind substrate.

This sequence belongs to the RbsD / FucU family. FucU mutarotase subfamily. Homodecamer.

It is found in the cytoplasm. It carries out the reaction alpha-L-fucose = beta-L-fucose. Its pathway is carbohydrate metabolism; L-fucose metabolism. Its function is as follows. Involved in the anomeric conversion of L-fucose. The polypeptide is L-fucose mutarotase (Haemophilus influenzae (strain 86-028NP)).